The following is a 359-amino-acid chain: Phosphoserine aminotransferase (359 aa).

Arg-41 contacts L-glutamate. Residues Ala-75 to Ser-76, Trp-101, Thr-152, Asp-171, and Gln-194 contribute to the pyridoxal 5'-phosphate site. An N6-(pyridoxal phosphate)lysine modification is found at Lys-195. Asn-236 to Thr-237 serves as a coordination point for pyridoxal 5'-phosphate.

The protein belongs to the class-V pyridoxal-phosphate-dependent aminotransferase family. SerC subfamily. In terms of assembly, homodimer. The cofactor is pyridoxal 5'-phosphate.

It is found in the cytoplasm. It catalyses the reaction O-phospho-L-serine + 2-oxoglutarate = 3-phosphooxypyruvate + L-glutamate. The enzyme catalyses 4-(phosphooxy)-L-threonine + 2-oxoglutarate = (R)-3-hydroxy-2-oxo-4-phosphooxybutanoate + L-glutamate. Its pathway is amino-acid biosynthesis; L-serine biosynthesis; L-serine from 3-phospho-D-glycerate: step 2/3. The protein operates within cofactor biosynthesis; pyridoxine 5'-phosphate biosynthesis; pyridoxine 5'-phosphate from D-erythrose 4-phosphate: step 3/5. Its function is as follows. Catalyzes the reversible conversion of 3-phosphohydroxypyruvate to phosphoserine and of 3-hydroxy-2-oxo-4-phosphonooxybutanoate to phosphohydroxythreonine. In Acinetobacter baylyi (strain ATCC 33305 / BD413 / ADP1), this protein is Phosphoserine aminotransferase.